A 304-amino-acid chain; its full sequence is Nucleotide-binding protein SH2124 (304 aa).

19–26 contributes to the ATP binding site; sequence GLSGAGKS. Residue 70-73 participates in GTP binding; the sequence is DLRG.

The protein belongs to the RapZ-like family.

Functionally, displays ATPase and GTPase activities. This chain is Nucleotide-binding protein SH2124, found in Staphylococcus haemolyticus (strain JCSC1435).